Here is a 219-residue protein sequence, read N- to C-terminus: Ribose-5-phosphate isomerase A (219 aa).

Residues 28–31, 81–84, and 94–97 each bind substrate; these read TGST, DGAD, and KGGG. Glu103 serves as the catalytic Proton acceptor. Lys121 contributes to the substrate binding site.

Belongs to the ribose 5-phosphate isomerase family. Homodimer.

It carries out the reaction aldehydo-D-ribose 5-phosphate = D-ribulose 5-phosphate. The protein operates within carbohydrate degradation; pentose phosphate pathway; D-ribose 5-phosphate from D-ribulose 5-phosphate (non-oxidative stage): step 1/1. Its function is as follows. Catalyzes the reversible conversion of ribose-5-phosphate to ribulose 5-phosphate. The protein is Ribose-5-phosphate isomerase A of Shewanella sp. (strain ANA-3).